The chain runs to 294 residues: ATP synthase gamma chain (294 aa).

The protein belongs to the ATPase gamma chain family. F-type ATPases have 2 components, CF(1) - the catalytic core - and CF(0) - the membrane proton channel. CF(1) has five subunits: alpha(3), beta(3), gamma(1), delta(1), epsilon(1). CF(0) has three main subunits: a, b and c.

It is found in the cell inner membrane. In terms of biological role, produces ATP from ADP in the presence of a proton gradient across the membrane. The gamma chain is believed to be important in regulating ATPase activity and the flow of protons through the CF(0) complex. This is ATP synthase gamma chain from Caulobacter sp. (strain K31).